The sequence spans 367 residues: Regulator of fusion ref-1 (367 aa).

Over residues 1 to 10 (MVLISTPPPA) the composition is skewed to pro residues. The interval 1–24 (MVLISTPPPAYAHNRKTSQEKKRR) is disordered. The segment at 11–24 (YAHNRKTSQEKKRR) is basic motif 1. Positions 11-63 (YAHNRKTSQEKKRRDEINAKIKELQLLIQNESDNEKMTQGDVLNRAVEVVSRM) constitute a bHLH 1 domain. Positions 25–63 (DEINAKIKELQLLIQNESDNEKMTQGDVLNRAVEVVSRM) are helix-loop-helix motif 1. 2 disordered regions span residues 133-177 (RSES…RRDR) and 313-367 (ATSP…RPWE). Residues 141 to 157 (SSMSYRSQSSSPSTSES) show a composition bias toward low complexity. Residues 161 to 177 (IDRKEVKKNREQDRRDR) show a composition bias toward basic and acidic residues. The tract at residues 162–175 (DRKEVKKNREQDRR) is basic motif 2. The bHLH 2 domain occupies 162-219 (DRKEVKKNREQDRRDRQGEAFDALKNFIIENKLMTSHQVEKMQRLNTLDIIIAYIQNK). The helix-loop-helix motif 2 stretch occupies residues 176–219 (DRQGEAFDALKNFIIENKLMTSHQVEKMQRLNTLDIIIAYIQNK). Residues 313 to 354 (ATSPKSQQSPSYSLDSPPPSSDTSSSSIETPSTPNENSNSNP) are compositionally biased toward low complexity. The span at 356-367 (ASRKSKLFRPWE) shows a compositional bias: basic residues.

As to quaternary structure, interacts with unc-37.

Its subcellular location is the nucleus. In terms of biological role, probable transcription factor. Binds 5'-TGCCACGTGTCCA-3' in vitro, probably via the E-box motif 5'-CA[TC][AG]TG-3'. Acts in embryonic development in a Notch-dependent manner, perhaps as a direct target of transcriptional regulator lag-1 in the Notch signaling pathway. Also acts in embryonic development in a Notch-independent manner. Plays a role in both Notch-dependent and -independent pathways in the execution of neuronal lineage decisions in the embryo. Also involved in regulating cell fate leading to formation of neuronal structures known as postdeirids. Involved in the pattern of cell fusion with a large syncytium known as hyp-7, during larval development, in hermaphrodites. Plays a role in regulating the activity of homeobox protein mab-5 in Pn.p cells. The polypeptide is Regulator of fusion ref-1 (Caenorhabditis elegans).